A 107-amino-acid polypeptide reads, in one-letter code: Protein Rev (107 aa).

Phosphoserine; by host CK2 is present on residues Ser5 and Ser8. The segment at 18-26 is homomultimerization; that stretch reads IIKILYQSN. Disordered stretches follow at residues 26–50 and 82–107; these read NPYP…ARQR and NINC…VGNP. A Nuclear localization signal and RNA-binding (RRE) motif is present at residues 34–50; it reads TRQARRNRRRRWRARQR. Basic residues predominate over residues 36–50; the sequence is QARRNRRRRWRARQR. The short motif at 73-84 is the Nuclear export signal and binding to XPO1 element; it reads FQLPPIERLNIN. The span at 86–101 shows a compositional bias: low complexity; that stretch reads SESGGTSGTQQPQGNT. Ser92 is subject to Phosphoserine; by host.

It belongs to the HIV-1 REV protein family. As to quaternary structure, homomultimer; when bound to the RRE. Multimeric assembly is essential for activity and may involve XPO1. Binds to human KPNB1, XPO1, TNPO1, RANBP5 and IPO7. Interacts with the viral Integrase. Interacts with human KHDRBS1. Interacts with human NAP1; this interaction decreases Rev multimerization and stimulates its activity. Interacts with human DEAD-box helicases DDX3 and DDX24; these interactions may serve for viral RNA export to the cytoplasm and packaging, respectively. Interacts with human PSIP1; this interaction may inhibit HIV-1 DNA integration by promoting dissociation of the Integrase-LEDGF/p75 complex. Post-translationally, asymmetrically arginine dimethylated at one site by host PRMT6. Methylation impairs the RNA-binding activity and export of viral RNA from the nucleus to the cytoplasm. In terms of processing, phosphorylated by protein kinase CK2. Presence of, and maybe binding to the N-terminus of the regulatory beta subunit of CK2 is necessary for CK2-mediated Rev's phosphorylation.

The protein localises to the host nucleus. Its subcellular location is the host nucleolus. It localises to the host cytoplasm. Its function is as follows. Escorts unspliced or incompletely spliced viral pre-mRNAs (late transcripts) out of the nucleus of infected cells. These pre-mRNAs carry a recognition sequence called Rev responsive element (RRE) located in the env gene, that is not present in fully spliced viral mRNAs (early transcripts). This function is essential since most viral proteins are translated from unspliced or partially spliced pre-mRNAs which cannot exit the nucleus by the pathway used by fully processed cellular mRNAs. Rev itself is translated from a fully spliced mRNA that readily exits the nucleus. Rev's nuclear localization signal (NLS) binds directly to KPNB1/Importin beta-1 without previous binding to KPNA1/Importin alpha-1. KPNB1 binds to the GDP bound form of RAN (Ran-GDP) and targets Rev to the nucleus. In the nucleus, the conversion from Ran-GDP to Ran-GTP dissociates Rev from KPNB1 and allows Rev's binding to the RRE in viral pre-mRNAs. Rev multimerization on the RRE via cooperative assembly exposes its nuclear export signal (NES) to the surface. Rev can then form a complex with XPO1/CRM1 and Ran-GTP, leading to nuclear export of the complex. Conversion from Ran-GTP to Ran-GDP mediates dissociation of the Rev/RRE/XPO1/RAN complex, so that Rev can return to the nucleus for a subsequent round of export. Beside KPNB1, also seems to interact with TNPO1/Transportin-1, RANBP5/IPO5 and IPO7/RANBP7 for nuclear import. The nucleoporin-like HRB/RIP is an essential cofactor that probably indirectly interacts with Rev to release HIV RNAs from the perinuclear region to the cytoplasm. The chain is Protein Rev from Human immunodeficiency virus type 1 group M subtype C (isolate 92BR025) (HIV-1).